The primary structure comprises 338 residues: Heat-inducible transcription repressor HrcA (338 aa).

This sequence belongs to the HrcA family.

In terms of biological role, negative regulator of class I heat shock genes (grpE-dnaK-dnaJ and groELS operons). Prevents heat-shock induction of these operons. The polypeptide is Heat-inducible transcription repressor HrcA (Bacillus mycoides (strain KBAB4) (Bacillus weihenstephanensis)).